Reading from the N-terminus, the 307-residue chain is Small ribosomal subunit biogenesis GTPase RsgA (307 aa).

In terms of domain architecture, CP-type G spans 80–237; it reads KADLRQTIVS…IVDTPGIKEF (158 aa). Residues 129 to 132 and 180 to 188 contribute to the GTP site; these read NKID and GQSGVGKSS. Zn(2+) is bound by residues Cys-261, Cys-266, His-268, and Cys-274.

Belongs to the TRAFAC class YlqF/YawG GTPase family. RsgA subfamily. In terms of assembly, monomer. Associates with 30S ribosomal subunit, binds 16S rRNA. Zn(2+) serves as cofactor.

The protein localises to the cytoplasm. Functionally, one of several proteins that assist in the late maturation steps of the functional core of the 30S ribosomal subunit. Helps release RbfA from mature subunits. May play a role in the assembly of ribosomal proteins into the subunit. Circularly permuted GTPase that catalyzes slow GTP hydrolysis, GTPase activity is stimulated by the 30S ribosomal subunit. The protein is Small ribosomal subunit biogenesis GTPase RsgA of Borreliella burgdorferi (strain ATCC 35210 / DSM 4680 / CIP 102532 / B31) (Borrelia burgdorferi).